The following is an 804-amino-acid chain: MGPLLERWISREGRSDGGDASGPVLFWCVLIIFAVPDAIRSSSLRLGQVAPRLVLFSNFKAFRSPKFAKILPGSDLFSPRVLGFRTRVVLLLDVFEVGFALFCKASSTMGNSLPVESKVTVEEENDRIKYIVSSMQGLGHKMEDAHAAILSLDDTTSTSFFGVYDGHGGAEVASYCAKRFHIELCNHEDYHNDLTNALDNVFFSMDENLQQSDAWRELVIPRDNGWMYFLKAGVCANFWPFPQAYTGPAYEGSTACVVVIRGDQMIVGHAGDSRCVLSRQGGLAIDLSSDHKPRTSESERERVQNAGGISLGVDCEKVMENYVIKEQWILGYFGESVTISRSIGDFAFKQNKDLNREEQMLICDPDIHTHDITGDMEFLVIASQGLWSCMESADVVAYIHVRLLEGVELRVICEELVQSGLASGENTTVILVQFKPGAFQFQYELVDPAAFDTAASNVASTSAGPAGGSDSDTSATSDEGVDDTATAGTTTTGYEAGSSTGPGSGGGSANAAFDSGGDLAANLDIATNFGSDDLAANLDIATDIDTEDVFTFINSDDTFGINSDEVELDPNFRPKPQVRRAHDGPSPTPSEIEADLNASPTRYNMRDIFEAFDKVEAELGGFPLQGHDVSSTSTNPNTATDTGSGSRTGDDDVDGAIARAMAVASSVMTGAGYEVDSTTTNPSAAADTGSYTGDEIKVDDSTSGSARGDSGELVNNDTTVADNNASGVADSTTVGDEVDPTATVAADDSNTGDKVDPPAITKATADSNTSGEVDVDATATATASASAAVADDEGTAPDDSEGSP.

The chain crosses the membrane as a helical span at residues 19 to 39 (DASGPVLFWCVLIIFAVPDAI). The PPM-type phosphatase domain occupies 129-434 (KYIVSSMQGL…ENTTVILVQF (306 aa)). 4 residues coordinate Mn(2+): D165, G166, Q384, and E425. 4 disordered regions span residues 460-509 (STSA…GGSA), 564-599 (DEVELDPNFRPKPQVRRAHDGPSPTPSEIEADLNAS), 623-653 (PLQGHDVSSTSTNPNTATDTGSGSRTGDDDV), and 675-804 (VDST…EGSP). Residues 468 to 499 (GSDSDTSATSDEGVDDTATAGTTTTGYEAGSS) are compositionally biased toward low complexity. Residues 628–637 (DVSSTSTNPN) are compositionally biased toward polar residues. The span at 638–647 (TATDTGSGSR) shows a compositional bias: low complexity. A compositionally biased stretch (polar residues) spans 713 to 734 (LVNNDTTVADNNASGVADSTTV). Residues 776-789 (DATATATASASAAV) show a composition bias toward low complexity. Residues 790–804 (ADDEGTAPDDSEGSP) are compositionally biased toward acidic residues.

It belongs to the PP2C family. Requires Mg(2+) as cofactor. It depends on Mn(2+) as a cofactor.

Its subcellular location is the membrane. It carries out the reaction O-phospho-L-seryl-[protein] + H2O = L-seryl-[protein] + phosphate. It catalyses the reaction O-phospho-L-threonyl-[protein] + H2O = L-threonyl-[protein] + phosphate. The sequence is that of Probable protein phosphatase 2C 18 from Oryza sativa subsp. japonica (Rice).